The following is a 288-amino-acid chain: Oxaloacetate decarboxylase (288 aa).

Serine 47 is a substrate binding site. Aspartate 85 contributes to the Mg(2+) binding site. Residues arginine 156 and histidine 232 each coordinate substrate.

This sequence belongs to the isocitrate lyase/PEP mutase superfamily. Oxaloacetate decarboxylase family. Homotetramer; dimer of dimers. Mg(2+) is required as a cofactor.

It carries out the reaction oxaloacetate + H(+) = pyruvate + CO2. Catalyzes the decarboxylation of oxaloacetate into pyruvate. Seems to play a role in maintaining cellular concentrations of bicarbonate and pyruvate. The protein is Oxaloacetate decarboxylase of Rhodopseudomonas palustris (strain TIE-1).